We begin with the raw amino-acid sequence, 223 residues long: ATP phosphoribosyltransferase (223 aa).

It belongs to the ATP phosphoribosyltransferase family. Short subfamily. Heteromultimer composed of HisG and HisZ subunits.

It is found in the cytoplasm. The catalysed reaction is 1-(5-phospho-beta-D-ribosyl)-ATP + diphosphate = 5-phospho-alpha-D-ribose 1-diphosphate + ATP. It participates in amino-acid biosynthesis; L-histidine biosynthesis; L-histidine from 5-phospho-alpha-D-ribose 1-diphosphate: step 1/9. Its function is as follows. Catalyzes the condensation of ATP and 5-phosphoribose 1-diphosphate to form N'-(5'-phosphoribosyl)-ATP (PR-ATP). Has a crucial role in the pathway because the rate of histidine biosynthesis seems to be controlled primarily by regulation of HisG enzymatic activity. This chain is ATP phosphoribosyltransferase, found in Novosphingobium aromaticivorans (strain ATCC 700278 / DSM 12444 / CCUG 56034 / CIP 105152 / NBRC 16084 / F199).